A 215-amino-acid chain; its full sequence is Small ribosomal subunit protein uS3c (215 aa).

Positions 43–116 (IKNYIKKNMK…KLNMAITRIA (74 aa)) constitute a KH type-2 domain.

The protein belongs to the universal ribosomal protein uS3 family. In terms of assembly, part of the 30S ribosomal subunit.

The protein localises to the plastid. It localises to the chloroplast. The polypeptide is Small ribosomal subunit protein uS3c (rps3) (Morus indica (Mulberry)).